The chain runs to 658 residues: Cysteine-rich receptor-like protein kinase 14 (658 aa).

A signal peptide spans 1 to 22 (MELKNLFPIFWFVLVGFAVVSA). Gnk2-homologous domains lie at 23–125 (QECG…NSSF) and 131–240 (AEPH…LFPF). The Extracellular segment spans residues 23 to 277 (QECGKTGFFV…ATKKGSITIS (255 aa)). 5 N-linked (GlcNAc...) asparagine glycosylation sites follow: Asn51, Asn60, Asn102, Asn122, and Asn146. The helical transmembrane segment at 278 to 298 (IGIVWAIIIPTVIVVFLVLLA) threads the bilayer. Topologically, residues 299-658 (LGFVVYRRRK…DVTITDFEPR (360 aa)) are cytoplasmic. Residues 337–614 (FSESNIIGRG…NMMLINNSYV (278 aa)) enclose the Protein kinase domain. Residues 343 to 351 (IGRGGFGEV) and Lys364 each bind ATP. Position 409 is a phosphotyrosine (Tyr409). The active-site Proton acceptor is the Asp461. Position 465 is a phosphoserine (Ser465). Residue Thr501 is modified to Phosphothreonine. The residue at position 509 (Tyr509) is a Phosphotyrosine.

This sequence belongs to the protein kinase superfamily. Ser/Thr protein kinase family. CRK subfamily.

Its subcellular location is the membrane. The enzyme catalyses L-seryl-[protein] + ATP = O-phospho-L-seryl-[protein] + ADP + H(+). It catalyses the reaction L-threonyl-[protein] + ATP = O-phospho-L-threonyl-[protein] + ADP + H(+). The sequence is that of Cysteine-rich receptor-like protein kinase 14 (CRK14) from Arabidopsis thaliana (Mouse-ear cress).